A 532-amino-acid chain; its full sequence is 2,3-bisphosphoglycerate-independent phosphoglycerate mutase (532 aa).

D15 and S65 together coordinate Mn(2+). The active-site Phosphoserine intermediate is S65. Substrate contacts are provided by residues H126, R156–D157, R188, R194, R258–R261, and K331. 5 residues coordinate Mn(2+): D398, H402, D439, H440, and H457.

The protein belongs to the BPG-independent phosphoglycerate mutase family. In terms of assembly, monomer. Requires Mn(2+) as cofactor.

It carries out the reaction (2R)-2-phosphoglycerate = (2R)-3-phosphoglycerate. The protein operates within carbohydrate degradation; glycolysis; pyruvate from D-glyceraldehyde 3-phosphate: step 3/5. Catalyzes the interconversion of 2-phosphoglycerate and 3-phosphoglycerate. This Nostoc punctiforme (strain ATCC 29133 / PCC 73102) protein is 2,3-bisphosphoglycerate-independent phosphoglycerate mutase.